Here is a 1210-residue protein sequence, read N- to C-terminus: A disintegrin and metalloproteinase with thrombospondin motifs 19 (1210 aa).

The signal sequence occupies residues 1–30 (MGPEMRLTRICCCCCLLYQLGFLSHGTTSG). A propeptide spanning residues 31–319 (LQLTPDLEEW…KIADNRREKR (289 aa)) is cleaved from the precursor. N-linked (GlcNAc...) asparagine glycosylation is present at Asn-54. The segment at 55–166 (ATGLSGGSSD…PAQQEEPSAE (112 aa)) is disordered. Gly residues predominate over residues 69–78 (RSSGGGGRGQ). Residues 84 to 98 (REVRSVARAPQEEAT) are compositionally biased toward basic and acidic residues. Positions 113-122 (GAEDEEELES) are enriched in acidic residues. Residues 130 to 139 (SGDTALSSGT) are compositionally biased toward polar residues. The span at 143-158 (WQPPLPPQRPSSPPPA) shows a compositional bias: pro residues. The N-linked (GlcNAc...) asparagine glycan is linked to Asn-263. The Cysteine switch motif lies at 295 to 302 (HHCGVISD). Cys-297 contributes to the Zn(2+) binding site. One can recognise a Peptidase M12B domain in the interval 328 to 548 (YNIETVVVAD…KASSCLLHTD (221 aa)). 11 disulfide bridges follow: Cys-404/Cys-469, Cys-444/Cys-451, Cys-463/Cys-543, Cys-502/Cys-527, Cys-572/Cys-596, Cys-583/Cys-604, Cys-591/Cys-623, Cys-617/Cys-628, Cys-648/Cys-683, Cys-652/Cys-688, and Cys-663/Cys-673. His-485 lines the Zn(2+) pocket. Residue Glu-486 is part of the active site. 2 residues coordinate Zn(2+): His-489 and His-495. Positions 549-636 (PQSLSSVLVP…ECTRRTPAPE (88 aa)) constitute a Disintegrin domain. Positions 637 to 689 (HLAGEWSPWSSCSRSCSSGVSSRERKCPGLGSEARDCNGPRKQYRICENPPCP) constitute a TSP type-1 1 domain. The interval 794–917 (VIKGDFNHTR…PDNQSSKEPG (124 aa)) is spacer. N-linked (GlcNAc...) asparagine glycans are attached at residues Asn-800, Asn-910, Asn-931, Asn-952, and Asn-1012. TSP type-1 domains are found at residues 918–978 (PLFM…NEQP), 979–1040 (CQTR…QDCM), 1042–1086 (VWEA…EDCE), and 1090–1147 (KCYV…QPCN). Intrachain disulfides connect Cys-991–Cys-1034, Cys-995–Cys-1039, and Cys-1006–Cys-1023. A PLAC domain is found at 1163-1202 (LTFKCLGDQWPVYCRVIREKNLCQDMRWYQRCCETCRDFY).

Zn(2+) serves as cofactor. In terms of processing, the precursor is cleaved by a furin endopeptidase. Post-translationally, glycosylated. Can be O-fucosylated by POFUT2 on a serine or a threonine residue found within the consensus sequence C1-X(2)-(S/T)-C2-G of the TSP type-1 repeat domains where C1 and C2 are the first and second cysteine residue of the repeat, respectively. Fucosylated repeats can then be further glycosylated by the addition of a beta-1,3-glucose residue by the glucosyltransferase, B3GALTL. Fucosylation mediates the efficient secretion of ADAMTS family members. Can also be C-glycosylated with one or two mannose molecules on tryptophan residues within the consensus sequence W-X-X-W of the TPRs, and N-glycosylated. These other glycosylations can also facilitate secretion. In terms of tissue distribution, expressed predominantly in fetal ovary, low levels of expression is also detected in kidney, heart, skeletal muscle, lung and testis.

The protein localises to the secreted. The protein resides in the extracellular space. It is found in the extracellular matrix. The protein is A disintegrin and metalloproteinase with thrombospondin motifs 19 (Adamts19) of Mus musculus (Mouse).